Here is a 240-residue protein sequence, read N- to C-terminus: Transmembrane emp24 domain-containing protein 6 (240 aa).

An N-terminal signal peptide occupies residues 1–21; sequence MSPLLFGAGLVVLNLVTSARS. At 22 to 200 the chain is on the lumenal side; the sequence is QKTEPLSGSG…FFLIQSNYNY (179 aa). One can recognise a GOLD domain in the interval 53–138; that stretch reads TECFWQFAHQ…SVQVYLNFGV (86 aa). 2 N-linked (GlcNAc...) asparagine glycosylation sites follow: asparagine 107 and asparagine 156. A helical transmembrane segment spans residues 201–223; that stretch reads VNWWSTAQSLVIILSGILQLYFL. Over 224–240 the chain is Cytoplasmic; that stretch reads KRLFNVPTTTDTKKPRC.

Belongs to the EMP24/GP25L family.

Its subcellular location is the endoplasmic reticulum membrane. The polypeptide is Transmembrane emp24 domain-containing protein 6 (TMED6) (Homo sapiens (Human)).